Here is a 209-residue protein sequence, read N- to C-terminus: MEPVLTQNRVLTVPNMLSVIRLALIPAFVYVVLSAHANGWGVAILVFSGVSDWADGKIARLLNQSSRLGALLDPAVDRLYMVTVPIVFGLSGIVPWWFVLTLLTRDALLAGTLPLLWSRGLSALPVTYVGKAATFGFMVGFPTILLGQCDPLWSHVLLACGWAFLIWGMYAYLWAFVLYAVQMTMVVRQMPKLKGRAHRPAAQNAGERG.

The next 4 helical transmembrane spans lie at 27–47 (AFVY…ILVF), 82–102 (VTVP…VLTL), 126–146 (VTYV…TILL), and 157–177 (LLAC…WAFV).

It belongs to the CDP-alcohol phosphatidyltransferase class-I family.

The protein localises to the cell membrane. It carries out the reaction a CDP-1,2-diacyl-sn-glycerol + a 1,2-diacyl-sn-glycero-3-phospho-(1'-sn-glycerol) = a cardiolipin + CMP + H(+). It participates in lipid metabolism; phospholipid metabolism. Functionally, may catalyze the biosynthesis of cardiolipin from phosphatidylglycerol (PG) and CDP-diacylglycerol. This chain is Putative cardiolipin synthase, found in Mycobacterium bovis (strain ATCC BAA-935 / AF2122/97).